Here is a 217-residue protein sequence, read N- to C-terminus: Ribonuclease HII (217 aa).

The RNase H type-2 domain occupies 16–217; sequence YCIAGVDEVG…VARVLGTYHD (202 aa). The a divalent metal cation site is built by Asp22, Glu23, and Asp114.

Belongs to the RNase HII family. Requires Mn(2+) as cofactor. It depends on Mg(2+) as a cofactor.

It localises to the cytoplasm. It carries out the reaction Endonucleolytic cleavage to 5'-phosphomonoester.. Endonuclease that specifically degrades the RNA of RNA-DNA hybrids. The sequence is that of Ribonuclease HII from Colwellia psychrerythraea (strain 34H / ATCC BAA-681) (Vibrio psychroerythus).